A 132-amino-acid polypeptide reads, in one-letter code: Large-conductance mechanosensitive channel (132 aa).

3 helical membrane passes run 14–34 (VVDL…VSSL), 38–58 (IITP…LHFG), and 67–87 (GNFI…FMFI).

The protein belongs to the MscL family. As to quaternary structure, homopentamer.

The protein resides in the cell membrane. Functionally, channel that opens in response to stretch forces in the membrane lipid bilayer. May participate in the regulation of osmotic pressure changes within the cell. The chain is Large-conductance mechanosensitive channel from Bacillus cereus (strain G9842).